A 172-amino-acid chain; its full sequence is NADH-quinone oxidoreductase subunit B (172 aa).

Residues Cys52, Cys53, Cys117, and Cys147 each contribute to the [4Fe-4S] cluster site.

It belongs to the complex I 20 kDa subunit family. NDH-1 is composed of 14 different subunits. Subunits NuoB, C, D, E, F, and G constitute the peripheral sector of the complex. [4Fe-4S] cluster serves as cofactor.

The protein resides in the cell inner membrane. The enzyme catalyses a quinone + NADH + 5 H(+)(in) = a quinol + NAD(+) + 4 H(+)(out). Its function is as follows. NDH-1 shuttles electrons from NADH, via FMN and iron-sulfur (Fe-S) centers, to quinones in the respiratory chain. Couples the redox reaction to proton translocation (for every two electrons transferred, four hydrogen ions are translocated across the cytoplasmic membrane), and thus conserves the redox energy in a proton gradient. The chain is NADH-quinone oxidoreductase subunit B from Ehrlichia ruminantium (strain Gardel).